The sequence spans 1176 residues: Serine/threonine-protein kinase pakF (1176 aa).

Low complexity-rich tracts occupy residues 1-19 (MSNL…ESSS) and 32-52 (NLLN…SGSN). Disordered regions lie at residues 1–231 (MSNL…HESR) and 254–361 (LPST…KKTK). The segment covering 64 to 76 (QLPPNYTPPPPPH) has biased composition (pro residues). Residues 92–133 (LNNENSDNNNNNNNNNNNNNNNNNNNNNNNNNNNEQLARTES) adopt a coiled-coil conformation. Composition is skewed to low complexity over residues 93–125 (NNEN…NNNN), 133–148 (SSVS…SNSG), and 156–172 (SSNI…ETYS). Over residues 173 to 197 (MSPNQTLNSNIDSSEQQHQDLSSSV) the composition is skewed to polar residues. Residues 198–226 (NNNNNNNNNNNNNNNNNNNNNNNNNNNNN) show a composition bias toward low complexity. A compositionally biased stretch (polar residues) spans 254–289 (LPSTPTQQNVEIQTTNGGSSETSPNGLISPRPSNDQ). Residues 316–353 (SLSSSTTTPSTTSSLTSSPSSSSLAISSPNTTAATTTN) show a composition bias toward low complexity. Residues 370-383 (ISVPYNVIHKMHVD) enclose the CRIB domain. A Protein kinase domain is found at 394-646 (FILDEKLGDG…PIDLLCHPFL (253 aa)). Residues 400 to 408 (LGDGAYGSV) and Lys-423 each bind ATP. The active-site Proton acceptor is Asp-514. Disordered stretches follow at residues 670-723 (IDDL…SDEL), 753-885 (QEEE…GNNL), 968-1083 (HTTS…TGRA), and 1112-1176 (NSNS…NIKK). Low complexity-rich tracts occupy residues 682 to 693 (SQSSSSSSPQSP) and 710 to 720 (SIISPIPSSPS). 2 stretches are compositionally biased toward acidic residues: residues 767–789 (DEQD…EDVD) and 813–844 (DQDD…DEEI). Residues 812-873 (SDQDDEEEDE…NKKKNKKNNL (62 aa)) are a coiled coil. Positions 852 to 870 (VRKKKNKSTKKSNKKKNKK) are enriched in basic residues. Composition is skewed to polar residues over residues 873–884 (LSTIGKSGSGNN) and 968–985 (HTTS…ATNL). 3 stretches are compositionally biased toward low complexity: residues 991–1044 (SSSP…RPNS), 1051–1066 (NNSS…SSSS), and 1148–1176 (SSGS…NIKK).

Belongs to the protein kinase superfamily. STE Ser/Thr protein kinase family. STE20 subfamily. Requires Mg(2+) as cofactor.

The enzyme catalyses L-seryl-[protein] + ATP = O-phospho-L-seryl-[protein] + ADP + H(+). It catalyses the reaction L-threonyl-[protein] + ATP = O-phospho-L-threonyl-[protein] + ADP + H(+). The protein is Serine/threonine-protein kinase pakF of Dictyostelium discoideum (Social amoeba).